Reading from the N-terminus, the 240-residue chain is tRNA (guanine-N(1)-)-methyltransferase (240 aa).

S-adenosyl-L-methionine contacts are provided by residues Gly-110 and Leu-129–Leu-134.

Belongs to the RNA methyltransferase TrmD family. Homodimer.

It is found in the cytoplasm. It carries out the reaction guanosine(37) in tRNA + S-adenosyl-L-methionine = N(1)-methylguanosine(37) in tRNA + S-adenosyl-L-homocysteine + H(+). In terms of biological role, specifically methylates guanosine-37 in various tRNAs. The sequence is that of tRNA (guanine-N(1)-)-methyltransferase from Clostridium botulinum (strain ATCC 19397 / Type A).